A 250-amino-acid chain; its full sequence is Expansin-like B1 (250 aa).

An N-terminal signal peptide occupies residues M1–S24. In terms of domain architecture, Expansin-like EG45 spans R45 to Y149. N-linked (GlcNAc...) asparagine glycosylation occurs at N72. Positions H163 to S245 constitute an Expansin-like CBD domain.

It belongs to the expansin family. Expansin-like B subfamily.

The protein localises to the secreted. This chain is Expansin-like B1 (EXLB1), found in Arabidopsis thaliana (Mouse-ear cress).